The following is a 513-amino-acid chain: MTNLLSIITFLPIVAAIIMALFLRGQDEAAARNAKWLALLTTTATFVISLFVLFRFDPANTGFQFVEDHAWIMGVCYKMGVDGISVLFVLLTTFMMPLTILSTWQVQDKVKEYMIAFLVLEGLMIGVFTALDLVLFYLFFEAGLIPMFLIIGIWGGKDRIYASFKFFLYTFLGSVLMLVAMIAMYRMAGTTDIPTLLTFDFPSENFRLLGMTVVGGMQMLLFLAFFASFAVKMPMWPVHTWLPDAHVQAPTAGSVLLAAVLLKMGGYGFLRFSLPMFPVASGVAQPYVFWLSAIAIVYTSLVALAQSDMKKVIAYSSVAHMGYVTMGVFAANQIGVDGAIFQMLSHGFISGALFLCVGVIYDRMHTREIDAYGGLVNRMPAYAAVFMFFTMANVGLPGTSGFVGEFLTLMGVFRVDTWVALVATSGVILSAAYALWLYRRVTLGQLIKESLKSITDMTPRERWVFIPLIAMTLILGVYPRLVTDVTGPAVAALVQDYNQSQPAAPVATAQASH.

14 helical membrane-spanning segments follow: residues 3-23 (NLLSIITFLPIVAAIIMALFL), 34-54 (AKWLALLTTTATFVISLFVLF), 81-101 (VDGISVLFVLLTTFMMPLTIL), 112-132 (EYMIAFLVLEGLMIGVFTALD), 133-153 (LVLFYLFFEAGLIPMFLIIGI), 164-184 (FKFFLYTFLGSVLMLVAMIAM), 211-231 (MTVVGGMQMLLFLAFFASFAV), 250-270 (PTAGSVLLAAVLLKMGGYGFL), 277-297 (FPVASGVAQPYVFWLSAIAIV), 312-332 (VIAYSSVAHMGYVTMGVFAAN), 340-360 (IFQMLSHGFISGALFLCVGVI), 383-403 (AAVFMFFTMANVGLPGTSGFV), 418-438 (WVALVATSGVILSAAYALWLY), and 463-483 (WVFIPLIAMTLILGVYPRLVT).

The protein belongs to the complex I subunit 4 family. In terms of assembly, NDH-1 is composed of at least 14 different subunits, Nqo1 to Nqo14. The complex has a L-shaped structure, with the hydrophobic arm (subunits Nqo7, Nqo8, Nqo10 to Nqo14) embedded in the inner membrane and the hydrophilic peripheral arm (subunits Nqo1 to Nqo6, Nqo9) protruding into the bacterial cytoplasm. The hydrophilic domain contains all the redox centers.

The protein localises to the cell inner membrane. It carries out the reaction a quinone + NADH + 5 H(+)(in) = a quinol + NAD(+) + 4 H(+)(out). Functionally, NDH-1 shuttles electrons from NADH, via FMN and iron-sulfur (Fe-S) centers, to quinones in the respiratory chain. The immediate electron acceptor for the enzyme in this species is believed to be ubiquinone. Couples the redox reaction to proton translocation (for every two electrons transferred, four hydrogen ions are translocated across the cytoplasmic membrane), and thus conserves the redox energy in a proton gradient. This chain is NADH-quinone oxidoreductase chain 13, found in Paracoccus denitrificans.